Consider the following 247-residue polypeptide: E3 ubiquitin-protein ligase RNF182 (247 aa).

The RING-type zinc finger occupies 20-68; the sequence is CKICYNRYNLKQRKPKVLECCHRVCAKCLYKIIDFGDSPQGVIVCPFCR. A run of 2 helical transmembrane segments spans residues 184 to 204 and 211 to 231; these read VLVW…IYLL and LGVV…VYGF.

Interacts with ATP6V0C. As to expression, up-regulated in neuronal cells subjected to cell death-inducing injuries, such as oxygen and glucose deprivation (at protein level). Could be up-regulated in Alzheimer disease brains. Highly expressed in innate immune organs such as lymph nodes and spleen and in immune cells such as macrophages and dendritic cells.

Its subcellular location is the membrane. The protein localises to the cytoplasm. The enzyme catalyses S-ubiquitinyl-[E2 ubiquitin-conjugating enzyme]-L-cysteine + [acceptor protein]-L-lysine = [E2 ubiquitin-conjugating enzyme]-L-cysteine + N(6)-ubiquitinyl-[acceptor protein]-L-lysine.. It functions in the pathway protein modification; protein ubiquitination. In terms of biological role, E3 ubiquitin-protein ligase that mediates the ubiquitination of ATP6V0C and targets it to degradation via the ubiquitin-proteasome pathway. Also plays a role in the inhibition of TLR-triggered innate immune response by mediating 'Lys'-48-linked ubiquitination and subsequent degradation of NF-kappa-B component RELA. This Homo sapiens (Human) protein is E3 ubiquitin-protein ligase RNF182 (RNF182).